A 332-amino-acid polypeptide reads, in one-letter code: Anthranilate phosphoribosyltransferase (332 aa).

5-phospho-alpha-D-ribose 1-diphosphate is bound by residues Gly78, 81 to 82, Ser86, 88 to 91, 106 to 114, and Ser118; these read GD, NIST, and KHGNKSITS. Residue Gly78 participates in anthranilate binding. Position 90 (Ser90) interacts with Mg(2+). Residue Asn109 participates in anthranilate binding. Position 163 (Arg163) interacts with anthranilate. Residues Asp222 and Glu223 each coordinate Mg(2+).

The protein belongs to the anthranilate phosphoribosyltransferase family. Homodimer. Mg(2+) is required as a cofactor.

It catalyses the reaction N-(5-phospho-beta-D-ribosyl)anthranilate + diphosphate = 5-phospho-alpha-D-ribose 1-diphosphate + anthranilate. Its pathway is amino-acid biosynthesis; L-tryptophan biosynthesis; L-tryptophan from chorismate: step 2/5. In terms of biological role, catalyzes the transfer of the phosphoribosyl group of 5-phosphorylribose-1-pyrophosphate (PRPP) to anthranilate to yield N-(5'-phosphoribosyl)-anthranilate (PRA). This is Anthranilate phosphoribosyltransferase from Staphylococcus aureus (strain USA300).